We begin with the raw amino-acid sequence, 323 residues long: NADH-cytochrome b5 reductase 2 (323 aa).

A helical membrane pass occupies residues 32–48; the sequence is LAPIYVAVGLTGLGVGL. An FAD-binding FR-type domain is found at 72–177; the sequence is QGWVDLKLAQ…KGPIPKYPWE (106 aa). An FAD-binding site is contributed by 180–215; it reads KHKHICLIAGGTGITPMYQLARKIFKDPEDQTKVTL.

Belongs to the flavoprotein pyridine nucleotide cytochrome reductase family. FAD serves as cofactor.

It localises to the mitochondrion outer membrane. The catalysed reaction is 2 Fe(III)-[cytochrome b5] + NADH = 2 Fe(II)-[cytochrome b5] + NAD(+) + H(+). Its function is as follows. May mediate the reduction of outer membrane cytochrome b5. The chain is NADH-cytochrome b5 reductase 2 (mcr1) from Neosartorya fischeri (strain ATCC 1020 / DSM 3700 / CBS 544.65 / FGSC A1164 / JCM 1740 / NRRL 181 / WB 181) (Aspergillus fischerianus).